Reading from the N-terminus, the 217-residue chain is Large ribosomal subunit protein bL25 (217 aa).

Positions 185–217 are disordered; it reads TKETVEDEEAEEAAAEGAEETGETGETEEGGDE. A compositionally biased stretch (acidic residues) spans 189 to 217; it reads VEDEEAEEAAAEGAEETGETGETEEGGDE.

Belongs to the bacterial ribosomal protein bL25 family. CTC subfamily. Part of the 50S ribosomal subunit; part of the 5S rRNA/L5/L18/L25 subcomplex. Contacts the 5S rRNA. Binds to the 5S rRNA independently of L5 and L18.

This is one of the proteins that binds to the 5S RNA in the ribosome where it forms part of the central protuberance. The protein is Large ribosomal subunit protein bL25 of Desulfosudis oleivorans (strain DSM 6200 / JCM 39069 / Hxd3) (Desulfococcus oleovorans).